A 102-amino-acid polypeptide reads, in one-letter code: Small ribosomal subunit protein uS10 (102 aa).

It belongs to the universal ribosomal protein uS10 family. Part of the 30S ribosomal subunit.

In terms of biological role, involved in the binding of tRNA to the ribosomes. The chain is Small ribosomal subunit protein uS10 from Rhodopseudomonas palustris (strain BisB18).